The sequence spans 335 residues: Holliday junction branch migration complex subunit RuvB (335 aa).

Residues 1 to 183 (MDERIISSET…FGVIDHLEFY (183 aa)) are large ATPase domain (RuvB-L). ATP is bound by residues leucine 22, arginine 23, glycine 64, lysine 67, threonine 68, threonine 69, 130–132 (EDY), arginine 173, tyrosine 183, and arginine 220. Mg(2+) is bound at residue threonine 68. Residues 184–254 (TEEQLTEIVL…LAKEALTLLQ (71 aa)) form a small ATPAse domain (RuvB-S) region. The tract at residues 257–335 (PRGLDTIDQK…HLGISYEKEV (79 aa)) is head domain (RuvB-H). Residues arginine 293, arginine 312, and arginine 317 each coordinate DNA.

Belongs to the RuvB family. Homohexamer. Forms an RuvA(8)-RuvB(12)-Holliday junction (HJ) complex. HJ DNA is sandwiched between 2 RuvA tetramers; dsDNA enters through RuvA and exits via RuvB. An RuvB hexamer assembles on each DNA strand where it exits the tetramer. Each RuvB hexamer is contacted by two RuvA subunits (via domain III) on 2 adjacent RuvB subunits; this complex drives branch migration. In the full resolvosome a probable DNA-RuvA(4)-RuvB(12)-RuvC(2) complex forms which resolves the HJ.

The protein localises to the cytoplasm. The enzyme catalyses ATP + H2O = ADP + phosphate + H(+). In terms of biological role, the RuvA-RuvB-RuvC complex processes Holliday junction (HJ) DNA during genetic recombination and DNA repair, while the RuvA-RuvB complex plays an important role in the rescue of blocked DNA replication forks via replication fork reversal (RFR). RuvA specifically binds to HJ cruciform DNA, conferring on it an open structure. The RuvB hexamer acts as an ATP-dependent pump, pulling dsDNA into and through the RuvAB complex. RuvB forms 2 homohexamers on either side of HJ DNA bound by 1 or 2 RuvA tetramers; 4 subunits per hexamer contact DNA at a time. Coordinated motions by a converter formed by DNA-disengaged RuvB subunits stimulates ATP hydrolysis and nucleotide exchange. Immobilization of the converter enables RuvB to convert the ATP-contained energy into a lever motion, pulling 2 nucleotides of DNA out of the RuvA tetramer per ATP hydrolyzed, thus driving DNA branch migration. The RuvB motors rotate together with the DNA substrate, which together with the progressing nucleotide cycle form the mechanistic basis for DNA recombination by continuous HJ branch migration. Branch migration allows RuvC to scan DNA until it finds its consensus sequence, where it cleaves and resolves cruciform DNA. The sequence is that of Holliday junction branch migration complex subunit RuvB from Listeria welshimeri serovar 6b (strain ATCC 35897 / DSM 20650 / CCUG 15529 / CIP 8149 / NCTC 11857 / SLCC 5334 / V8).